The sequence spans 195 residues: MNRKGILFVISGPSGVGKGTLKKALLDQTKDLNLSISATTRPARLGEVHGQHYFFVDQAKFREMIEQDAFLEWAQVYSNLYGTPRGFVLNHLQQGRDVLLEIDIQGALQVKEKMPSGVFIFIYPPNLEELAFRLVSRGQDSQDSIEARLAACENELKHIDYYDYLVVNDKIDRALQKITAIIIAERCKIKNLNMR.

The region spanning 5–183 (GILFVISGPS…ALQKITAIII (179 aa)) is the Guanylate kinase-like domain. 12 to 19 (GPSGVGKG) lines the ATP pocket.

It belongs to the guanylate kinase family.

The protein localises to the cytoplasm. It carries out the reaction GMP + ATP = GDP + ADP. In terms of biological role, essential for recycling GMP and indirectly, cGMP. This is Guanylate kinase from Syntrophomonas wolfei subsp. wolfei (strain DSM 2245B / Goettingen).